A 233-amino-acid chain; its full sequence is Antiholin-like protein LrgB (233 aa).

A run of 7 helical transmembrane segments spans residues Ile-7–Leu-27, Gly-33–Leu-53, Ile-63–Leu-83, Ile-97–Glu-117, Gly-124–Ala-144, Leu-152–Ile-172, and Ile-212–Leu-232.

The protein belongs to the CidB/LrgB family. LrgB subfamily.

It localises to the cell membrane. Functionally, inhibits the expression or activity of extracellular murein hydrolases by interacting, possibly with LrgA, with the holin-like proteins CidA and/or CidB. The LrgAB and CidAB proteins may affect the proton motive force of the membrane. May be involved in programmed cell death (PCD), possibly triggering PCD in response to antibiotics and environmental stresses. This is Antiholin-like protein LrgB from Staphylococcus saprophyticus subsp. saprophyticus (strain ATCC 15305 / DSM 20229 / NCIMB 8711 / NCTC 7292 / S-41).